The chain runs to 542 residues: Chaperonin GroEL (542 aa).

ATP-binding positions include 29-32, Lys50, 86-90, Gly414, 477-479, and Asp493; these read TMGP, DGTTT, and NAA.

This sequence belongs to the chaperonin (HSP60) family. As to quaternary structure, forms a cylinder of 14 subunits composed of two heptameric rings stacked back-to-back. Interacts with the co-chaperonin GroES.

It is found in the cytoplasm. The catalysed reaction is ATP + H2O + a folded polypeptide = ADP + phosphate + an unfolded polypeptide.. Functionally, together with its co-chaperonin GroES, plays an essential role in assisting protein folding. The GroEL-GroES system forms a nano-cage that allows encapsulation of the non-native substrate proteins and provides a physical environment optimized to promote and accelerate protein folding. The protein is Chaperonin GroEL of Sulfurimonas denitrificans (strain ATCC 33889 / DSM 1251) (Thiomicrospira denitrificans (strain ATCC 33889 / DSM 1251)).